The sequence spans 548 residues: Uridine-cytidine kinase-like 1 (548 aa).

The segment covering 1 to 18 (MAAPPASMSAAPSPLQSA) has biased composition (low complexity). Positions 1–74 (MAAPPASMSA…CKSEPPLLRT (74 aa)) are disordered. Ser-56 and Ser-63 each carry phosphoserine. An ATP-binding site is contributed by 105-112 (GGSASGKT). Residue Ser-539 is modified to Phosphoserine.

The protein belongs to the uridine kinase family. As to quaternary structure, interacts with RNF19B. Post-translationally, ubiquitinated by RNF19B; which induces proteasomal degradation.

Its subcellular location is the cytoplasm. It is found in the nucleus. It carries out the reaction uridine + ATP = UMP + ADP + H(+). The catalysed reaction is cytidine + ATP = CMP + ADP + H(+). It participates in pyrimidine metabolism; UMP biosynthesis via salvage pathway; UMP from uridine: step 1/1. In terms of biological role, may contribute to UTP accumulation needed for blast transformation and proliferation. This is Uridine-cytidine kinase-like 1 (Uckl1) from Mus musculus (Mouse).